The following is a 462-amino-acid chain: 3-oxoacyl-[acyl-carrier-protein] synthase I, chloroplastic (462 aa).

Residues 1–35 constitute a chloroplast transit peptide; it reads MHAHAAHALGLRVPPPAFPRRRARPRRRPAAAVLA. The interval 1-45 is disordered; that stretch reads MHAHAAHALGLRVPPPAFPRRRARPRRRPAAAVLATSAAPQRETD. Over residues 19–29 the composition is skewed to basic residues; that stretch reads PRRRARPRRRP. Residues 30–39 are compositionally biased toward low complexity; the sequence is AAAVLATSAA. The region spanning 47 to 459 is the Ketosynthase family 3 (KS3) domain; that stretch reads RKRVVITGMG…GHNSVVVFAP (413 aa). Residues cysteine 213, histidine 353, and histidine 389 each act as for beta-ketoacyl synthase activity in the active site.

The protein belongs to the thiolase-like superfamily. Beta-ketoacyl-ACP synthases family. Homodimer.

It localises to the plastid. The protein localises to the chloroplast. It catalyses the reaction a fatty acyl-[ACP] + malonyl-[ACP] + H(+) = a 3-oxoacyl-[ACP] + holo-[ACP] + CO2. Its function is as follows. Catalyzes the condensation reaction of fatty acid synthesis by the addition to an acyl acceptor of two carbons from malonyl-ACP. Specific for elongation from C-10 to unsaturated C-16 and C-18 fatty acids. The protein is 3-oxoacyl-[acyl-carrier-protein] synthase I, chloroplastic (KAS12) of Hordeum vulgare (Barley).